A 655-amino-acid chain; its full sequence is Integrin beta-5 (655 aa).

The 234-residue stretch at 1-234 (DLSLSMKDDL…QLIINAYNSI (234 aa)) folds into the VWFA domain. The Extracellular portion of the chain corresponds to 1 to 575 (DLSLSMKDDL…REPECGNTPN (575 aa)). S3 and S5 together coordinate Mg(2+). Positions 5, 8, 9, and 40 each coordinate Ca(2+). A disulfide bond links C58 and C67. Residues N98, D100, P102, and E103 each coordinate Ca(2+). E103 serves as a coordination point for Mg(2+). C115 and C156 are oxidised to a cystine. An N-linked (GlcNAc...) asparagine glycan is attached at N203. G218 contributes to the Ca(2+) binding site. Disulfide bonds link C257-C269, C289-C317, C321-C340, C332-C343, C345-C354, C356-C386, C369-C384, C378-C389, C391-C404, C406-C427, C411-C425, C419-C430, and C432-C441. N316 carries N-linked (GlcNAc...) asparagine glycosylation. I-EGF domains follow at residues 321–355 (CSVG…TRCE), 356–405 (CQDG…PFCE), 406–442 (CDNF…DNCN), and 443–482 (CSTD…EMCE). N-linked (GlcNAc...) asparagine glycosylation occurs at N408. N442 is a glycosylation site (N-linked (GlcNAc...) asparagine). Cystine bridges form between C443-C466, C450-C464, C458-C469, C471-C481, C484-C487, C491-C538, C497-C517, C500-C513, and C546-C570. 2 N-linked (GlcNAc...) asparagine glycosylation sites follow: N510 and N561. Residues 576–598 (AMTILLAVVGSILLVGLALLAIW) form a helical membrane-spanning segment. Topologically, residues 599-655 (KLLVTIHDRREFAKFQSERSRARYEMASNPLYRKPISTHTVDFTFNKFNKSYNGTVD) are cytoplasmic. The residue at position 626 (S626) is a Phosphoserine.

The protein belongs to the integrin beta chain family. Heterodimer of an alpha and a beta subunit. Beta-5 (ITGB5) associates with alpha-V (ITGAV). Interacts with MYO10. Interacts with DAB2. Integrin ITGAV:ITGB5 interacts with FBLN5 (via N-terminus). ITGAV:ITGB5 interacts with CCN3. Interacts with tensin TNS3; TNS3 also interacts with PEAK1, thus acting as an adapter molecule to bridge the association of PEAK1 with ITGB5.

The protein resides in the cell membrane. Integrin alpha-V/beta-5 (ITGAV:ITGB5) is a receptor for fibronectin. It recognizes the sequence R-G-D in its ligand. This Papio cynocephalus (Yellow baboon) protein is Integrin beta-5 (ITGB5).